The following is a 224-amino-acid chain: ATP-dependent dethiobiotin synthetase BioD (224 aa).

12 to 17 (EVGKTV) is an ATP binding site. Thr-16 is a binding site for Mg(2+). Lys-34 is a catalytic residue. Residue Thr-38 coordinates substrate. ATP contacts are provided by residues Asp-47, 106–109 (EGAG), 166–167 (GS), and 196–198 (PEG). Positions 47 and 106 each coordinate Mg(2+).

The protein belongs to the dethiobiotin synthetase family. In terms of assembly, homodimer. The cofactor is Mg(2+).

The protein localises to the cytoplasm. It catalyses the reaction (7R,8S)-7,8-diammoniononanoate + CO2 + ATP = (4R,5S)-dethiobiotin + ADP + phosphate + 3 H(+). The protein operates within cofactor biosynthesis; biotin biosynthesis; biotin from 7,8-diaminononanoate: step 1/2. In terms of biological role, catalyzes a mechanistically unusual reaction, the ATP-dependent insertion of CO2 between the N7 and N8 nitrogen atoms of 7,8-diaminopelargonic acid (DAPA, also called 7,8-diammoniononanoate) to form a ureido ring. This Saccharopolyspora erythraea (strain ATCC 11635 / DSM 40517 / JCM 4748 / NBRC 13426 / NCIMB 8594 / NRRL 2338) protein is ATP-dependent dethiobiotin synthetase BioD.